The chain runs to 74 residues: Brevinin-2Ef (74 aa).

Positions 1–22 (MFTMKKSLLLIFFLGTISLSLC) are cleaved as a signal peptide. Positions 23–41 (QEERNADDDDGEMTEEEKR) are excised as a propeptide. Cys-68 and Cys-74 are joined by a disulfide.

The protein belongs to the frog skin active peptide (FSAP) family. Brevinin subfamily. In terms of tissue distribution, expressed by the skin glands.

It localises to the secreted. Its function is as follows. Shows antibacterial activity against representative Gram-negative and Gram-positive bacterial species, and hemolytic activity. In Pelophylax lessonae (Pool frog), this protein is Brevinin-2Ef.